Consider the following 224-residue polypeptide: Probable C-&gt;U-editing enzyme APOBEC-2 (224 aa).

Positions 1 to 25 are disordered; the sequence is MAQKEEAAAATEAASQNGEDLENLD. Positions 60 and 98 each coordinate Zn(2+). The CMP/dCMP-type deaminase domain occupies 64-169; sequence GRNKTFLCYV…LEIQDALKKL (106 aa). The Proton donor role is filled by E100. Residues C128 and C131 each coordinate Zn(2+).

This sequence belongs to the cytidine and deoxycytidylate deaminase family. Homotetramer. Requires Zn(2+) as cofactor.

The catalysed reaction is cytidine(6666) in apoB mRNA + H2O + H(+) = uridine(6666) in apoB mRNA + NH4(+). Functionally, probable C to U editing enzyme whose physiological substrate is not yet known. Does not display detectable apoB mRNA editing. Has a low intrinsic cytidine deaminase activity. May play a role in the epigenetic regulation of gene expression through the process of active DNA demethylation. In Pongo pygmaeus (Bornean orangutan), this protein is Probable C-&gt;U-editing enzyme APOBEC-2 (APOBEC2).